A 762-amino-acid polypeptide reads, in one-letter code: Xaa-Pro dipeptidyl-peptidase (762 aa).

Active-site charge relay system residues include Ser-349, Asp-469, and His-499.

This sequence belongs to the peptidase S15 family. Homodimer.

It is found in the cytoplasm. The catalysed reaction is Hydrolyzes Xaa-Pro-|- bonds to release unblocked, N-terminal dipeptides from substrates including Ala-Pro-|-p-nitroanilide and (sequentially) Tyr-Pro-|-Phe-Pro-|-Gly-Pro-|-Ile.. In terms of biological role, removes N-terminal dipeptides sequentially from polypeptides having unsubstituted N-termini provided that the penultimate residue is proline. This is Xaa-Pro dipeptidyl-peptidase from Streptococcus sanguinis (strain SK36).